Consider the following 218-residue polypeptide: Glutathione S-transferase Mu 1 (218 aa).

The 87-residue stretch at 2 to 88 (PMILGYWNVR…YLARKHHLCG (87 aa)) folds into the GST N-terminal domain. Residues 7 to 8 (YW), 43 to 46 (RSQW), Lys-50, and 59 to 60 (NL) contribute to the glutathione site. Ser-67 bears the Phosphoserine mark. 72–73 (QS) lines the glutathione pocket. The GST C-terminal domain occupies 90 to 208 (TEEERIRADI…KSSRYLSTPI (119 aa)). Position 116 (Tyr-116) interacts with substrate. Phosphoserine occurs at positions 205 and 210.

It belongs to the GST superfamily. Mu family. In terms of assembly, homodimer or heterodimer.

The protein resides in the cytoplasm. It catalyses the reaction RX + glutathione = an S-substituted glutathione + a halide anion + H(+). It carries out the reaction prostaglandin A2 + glutathione = prostaglandin A2-S-(R)-glutathione. The catalysed reaction is prostaglandin J2 + glutathione = prostaglandin J2-S-(R)-glutathione. The enzyme catalyses prostaglandin J2 + glutathione = prostaglandin J2-S-(S)-glutathione. It catalyses the reaction prostaglandin A2 + glutathione = prostaglandin A2-S-(S)-glutathione. It carries out the reaction 11(S)-hydroxy-14(S),15(S)-epoxy-(5Z,8Z,12E)-eicosatrienoate + glutathione = (11S,15S)-dihydroxy-14(R)-S-glutathionyl-(5Z,8Z,12E)-eicosatrienoate. Conjugation of reduced glutathione to a wide number of exogenous and endogenous hydrophobic electrophiles. The olfactory GST may be crucial for the acuity of the olfactory process. Participates in the formation of novel hepoxilin regioisomers. This is Glutathione S-transferase Mu 1 from Rattus norvegicus (Rat).